The primary structure comprises 195 residues: Nicotinamide riboside kinase 1 (195 aa).

ATP is bound at residue 10–18 (GVTNGGKTT). Residues Thr-17 and Asp-36 each contribute to the Mg(2+) site. The active-site Proton acceptor is the Asp-36. Residues 36 to 39 (DDFF) and 55 to 56 (YD) contribute to the substrate site. Residue Arg-128 participates in ATP binding. Substrate is bound by residues Arg-129 and 134-135 (YE). Residues 132–134 (RVY) and 172–174 (RSE) contribute to the ATP site.

The protein belongs to the uridine kinase family. NRK subfamily. As to quaternary structure, monomer.

It carries out the reaction beta-nicotinamide D-riboside + ATP = beta-nicotinamide D-ribonucleotide + ADP + H(+). The enzyme catalyses beta-D-ribosylnicotinate + ATP = nicotinate beta-D-ribonucleotide + ADP + H(+). The protein operates within cofactor biosynthesis; NAD(+) biosynthesis. Catalyzes the phosphorylation of nicotinamide riboside (NR) and nicotinic acid riboside (NaR) to form nicotinamide mononucleotide (NMN) and nicotinic acid mononucleotide (NaMN). In Rattus norvegicus (Rat), this protein is Nicotinamide riboside kinase 1 (Nmrk1).